Reading from the N-terminus, the 640-residue chain is MALALKQRPSRFRPTTTTYEDNYGYTMNFYQPMLDYLDAKAKGLEVKKPHLPWVSERGLKQYRPSNAVRQYNADEIVRLSRTCAARADEILLNFRAQKRSPFSVQKLVDASRVTKHLEPDTVVERSRQRRRRRQEELEDLIKRDTLKILQRIRKIELDNELDKMSDDFKRSIRGKSASAIAQALLSESEKNIKTAKKEEEDYIAQTLVRSSRAVSRARSRSSSPLDGQYRAHALHIELMDDRLVDKLDHRVSSSLHNVKRQLSTLNQRTVEFYADSSKQTSIEIEQLNARVIEAETRLKTEVTRIKKKLQIQITELEMSLDVANKTNIDLQKVIKKQSLQLTELQAHYEDVQRQLQATLDQYAVAQRRLAGLNGELEEVRSHLDSANRAKRTVELQYEEAASRINELTTANVSLVSIKSKLEQELSVVASDYEEVSKELRISDERYQKVQVELKHVVEQVHEEQERIVKLETIKKSLEVEVKNLSIRLEEVELNAVAGSKRIISKLEARIRDLELELEEEKRRHAETIKILRKKERTVKEVLVQCEEDQKNLILLQDALDKSTAKINIYRRQLSEQEGVSQQTTTRVRRFQRELEAAEDRADTAESSLNIIRAKHRTFVTTSTVPGSQVYIQETTRTITE.

Nonhelical region regions lie at residues 1–122 (MALA…PDTV) and 420–640 (KLEQ…TITE). A coiled-coil region spans residues 123–619 (VERSRQRRRR…IIRAKHRTFV (497 aa)).

Belongs to the paramyosin family. Phosphorylated. In terms of tissue distribution, found in all adult muscle tissues except in indirect flight muscles and a set of temporary abdominal muscles. Not detected in larval muscle.

The protein localises to the cytoplasm. Its subcellular location is the myofibril. Paramyosin is a major structural component of many thick filaments isolated from invertebrate muscles. In Drosophila melanogaster (Fruit fly), this protein is Paramyosin, short form (Prm).